The following is a 38-amino-acid chain: Large ribosomal subunit protein bL36 (38 aa).

Belongs to the bacterial ribosomal protein bL36 family.

This is Large ribosomal subunit protein bL36 from Proteus mirabilis (strain HI4320).